The chain runs to 351 residues: MVTIPISASTPYDVVLDNQDRWIDSVDWSRYSMLWVVTDKHVESLYGESFRSTLKLTHPHVVSSVVEAGDASKSLSQLEQLVAEGLRHGCDRETLIVAFGGGMIGDLAGFLASVYMRGVPYIQVPTTILAHDSAVGGKVAVNHPLAKNAIGSFYQPSGVYYNVTRLNTLSVQEVRSGLGELLKHAYLSRYVLESSFEDDLFLDLNENEPLDWVSWLARGIRVKQAIVETDEREQGIRAWLNFGHTFGHALESVEAYRIPHGEAVLHGMVFAFLVSGDEVRAMRLFDWMRSNDVTPIDWQPFDRYVEKMIRDKKNRHGAIRFVLLRETITVESVQLEHLQQTFEQMKGWWER.

NAD(+) is bound by residues 126 to 127, K138, and K147; that span reads TT. Zn(2+)-binding residues include E180, H244, and H260.

Belongs to the sugar phosphate cyclases superfamily. Dehydroquinate synthase family. Co(2+) is required as a cofactor. Requires Zn(2+) as cofactor. NAD(+) serves as cofactor.

The protein resides in the cytoplasm. The enzyme catalyses 7-phospho-2-dehydro-3-deoxy-D-arabino-heptonate = 3-dehydroquinate + phosphate. The protein operates within metabolic intermediate biosynthesis; chorismate biosynthesis; chorismate from D-erythrose 4-phosphate and phosphoenolpyruvate: step 2/7. In terms of biological role, catalyzes the conversion of 3-deoxy-D-arabino-heptulosonate 7-phosphate (DAHP) to dehydroquinate (DHQ). This is 3-dehydroquinate synthase from Exiguobacterium sp. (strain ATCC BAA-1283 / AT1b).